Reading from the N-terminus, the 483-residue chain is Regulatory protein ViaA (483 aa).

The protein belongs to the ViaA family. In terms of assembly, homodimer. Interacts with RavA.

It localises to the cytoplasm. Its function is as follows. Component of the RavA-ViaA chaperone complex, which may act on the membrane to optimize the function of some of the respiratory chains. ViaA stimulates the ATPase activity of RavA. The protein is Regulatory protein ViaA of Salmonella schwarzengrund (strain CVM19633).